Reading from the N-terminus, the 252-residue chain is Imidazole glycerol phosphate synthase subunit HisF (252 aa).

Catalysis depends on residues D11 and D130.

It belongs to the HisA/HisF family. As to quaternary structure, heterodimer of HisH and HisF.

Its subcellular location is the cytoplasm. The enzyme catalyses 5-[(5-phospho-1-deoxy-D-ribulos-1-ylimino)methylamino]-1-(5-phospho-beta-D-ribosyl)imidazole-4-carboxamide + L-glutamine = D-erythro-1-(imidazol-4-yl)glycerol 3-phosphate + 5-amino-1-(5-phospho-beta-D-ribosyl)imidazole-4-carboxamide + L-glutamate + H(+). It participates in amino-acid biosynthesis; L-histidine biosynthesis; L-histidine from 5-phospho-alpha-D-ribose 1-diphosphate: step 5/9. In terms of biological role, IGPS catalyzes the conversion of PRFAR and glutamine to IGP, AICAR and glutamate. The HisF subunit catalyzes the cyclization activity that produces IGP and AICAR from PRFAR using the ammonia provided by the HisH subunit. This is Imidazole glycerol phosphate synthase subunit HisF from Bacillus cytotoxicus (strain DSM 22905 / CIP 110041 / 391-98 / NVH 391-98).